The following is a 315-amino-acid chain: Protein FRA10AC1 homolog (315 aa).

Met1 bears the N-acetylmethionine mark. Positions 1 to 28 (MHGHGGYDSDFSDDEQGGGSSKKRKKTV) are disordered. Residues Ser9 and Ser12 each carry the phosphoserine modification. Lys36 is subject to N6-acetyllysine. Basic residues predominate over residues 225 to 235 (KEIKSTKKKSK). Residues 225-308 (KEIKSTKKKS…EKSQEEEFDD (84 aa)) are disordered. Composition is skewed to basic and acidic residues over residues 236-245 (TTPECDESPR) and 255-278 (EASKGKDEGHSSSKKSEDSRNRNA). Residues Ser283 and Ser285 each carry the phosphoserine modification.

As to quaternary structure, interacts with ESS2.

It is found in the nucleus. May be involved in pre-mRNA splicing. This Mus musculus (Mouse) protein is Protein FRA10AC1 homolog (Fra10ac1).